The following is a 177-amino-acid chain: Disulfide bond formation protein B (177 aa).

The Cytoplasmic portion of the chain corresponds to 1-14 (MMVWNWIDRTPRRV). The helical transmembrane segment at 15–31 (LALISLACVALLACGLY) threads the bilayer. Over 32-49 (LQHVVGLVPCPMCIVQRY) the chain is Periplasmic. Cys-41 and Cys-44 form a disulfide bridge. Residues 50-64 (ALIGLALLTGLASAR) form a helical membrane-spanning segment. Residues 65-70 (SAKGWW) lie on the Cytoplasmic side of the membrane. A helical membrane pass occupies residues 71 to 89 (LTLSALAALTAGFGATVAA). The Periplasmic portion of the chain corresponds to 90–145 (RQSWLQWYPPQSVSCGRDFYGMIESFPLSRAIPMILRGSGDCAAVDWSLLGGSIAN). A disulfide bond links Cys-104 and Cys-131. The chain crosses the membrane as a helical span at residues 146-164 (WSFLCFALLGLLLLALLAR). Topologically, residues 165-177 (GVRGARQRAPAPV) are cytoplasmic.

This sequence belongs to the DsbB family.

The protein localises to the cell inner membrane. Its function is as follows. Required for disulfide bond formation in some periplasmic proteins. Acts by oxidizing the DsbA protein. This is Disulfide bond formation protein B from Verminephrobacter eiseniae (strain EF01-2).